We begin with the raw amino-acid sequence, 97 residues long: Small integral membrane protein 8 (97 aa).

The disordered stretch occupies residues methionine 1 to glycine 24. The segment covering threonine 9–phenylalanine 20 has biased composition (basic and acidic residues). The helical transmembrane segment at proline 48–isoleucine 70 threads the bilayer.

The protein belongs to the SMIM8 family.

The protein resides in the membrane. This Homo sapiens (Human) protein is Small integral membrane protein 8 (SMIM8).